We begin with the raw amino-acid sequence, 99 residues long: Aspartyl/glutamyl-tRNA(Asn/Gln) amidotransferase subunit C (99 aa).

This sequence belongs to the GatC family. As to quaternary structure, heterotrimer of A, B and C subunits.

The enzyme catalyses L-glutamyl-tRNA(Gln) + L-glutamine + ATP + H2O = L-glutaminyl-tRNA(Gln) + L-glutamate + ADP + phosphate + H(+). It carries out the reaction L-aspartyl-tRNA(Asn) + L-glutamine + ATP + H2O = L-asparaginyl-tRNA(Asn) + L-glutamate + ADP + phosphate + 2 H(+). Its function is as follows. Allows the formation of correctly charged Asn-tRNA(Asn) or Gln-tRNA(Gln) through the transamidation of misacylated Asp-tRNA(Asn) or Glu-tRNA(Gln) in organisms which lack either or both of asparaginyl-tRNA or glutaminyl-tRNA synthetases. The reaction takes place in the presence of glutamine and ATP through an activated phospho-Asp-tRNA(Asn) or phospho-Glu-tRNA(Gln). This is Aspartyl/glutamyl-tRNA(Asn/Gln) amidotransferase subunit C from Cupriavidus metallidurans (strain ATCC 43123 / DSM 2839 / NBRC 102507 / CH34) (Ralstonia metallidurans).